A 96-amino-acid chain; its full sequence is Large ribosomal subunit protein eL21 (96 aa).

Residues 1–22 (MRKSKGFKSRSRYKLKRSIRPK) form a disordered region.

This sequence belongs to the eukaryotic ribosomal protein eL21 family.

This chain is Large ribosomal subunit protein eL21, found in Methanosphaera stadtmanae (strain ATCC 43021 / DSM 3091 / JCM 11832 / MCB-3).